We begin with the raw amino-acid sequence, 384 residues long: WAT1-related protein At4g08290 (384 aa).

10 consecutive transmembrane segments (helical) span residues 15–35 (LLMI…MATL), 43–63 (VVIV…ALIF), 73–93 (LSVL…DQGF), 104–124 (TYTS…AWIL), 140–160 (IIGT…KGPL), 186–206 (WVVG…FYVL), 219–239 (SLSA…ALVV), 255–275 (FAPL…QGMV), 282–302 (VFVT…ASFI), and 307–327 (IHFG…MVVW). EamA domains follow at residues 25-154 (AGTY…LVMT) and 198-326 (VAWS…YMVV).

The protein belongs to the drug/metabolite transporter (DMT) superfamily. Plant drug/metabolite exporter (P-DME) (TC 2.A.7.4) family.

It is found in the membrane. The chain is WAT1-related protein At4g08290 from Arabidopsis thaliana (Mouse-ear cress).